A 188-amino-acid polypeptide reads, in one-letter code: FMN-dependent NADPH-azoreductase (188 aa).

The protein belongs to the azoreductase type 2 family. Homotetramer. FMN is required as a cofactor.

In terms of biological role, catalyzes the reductive cleavage of azo bond in aromatic azo compounds to the corresponding amines. Requires NADPH, but not NADH, as an electron donor for its activity. The sequence is that of FMN-dependent NADPH-azoreductase (azo1) from Staphylococcus aureus (strain MSSA476).